The following is a 300-amino-acid chain: N-acetylmannosamine kinase (300 aa).

Residues 5 to 12 (ALDIGGTK) and 132 to 139 (GVGGGIVL) each bind ATP. His156, Cys166, Cys168, and Cys173 together coordinate Zn(2+).

It belongs to the ROK (NagC/XylR) family. NanK subfamily. In terms of assembly, homodimer.

The enzyme catalyses an N-acyl-D-mannosamine + ATP = an N-acyl-D-mannosamine 6-phosphate + ADP + H(+). The protein operates within amino-sugar metabolism; N-acetylneuraminate degradation; D-fructose 6-phosphate from N-acetylneuraminate: step 2/5. In terms of biological role, catalyzes the phosphorylation of N-acetylmannosamine (ManNAc) to ManNAc-6-P. The protein is N-acetylmannosamine kinase of Haemophilus influenzae (strain 86-028NP).